Consider the following 109-residue polypeptide: UPF0060 membrane protein RHA1_ro06609 (109 aa).

A run of 4 helical transmembrane segments spans residues 7–27 (VALF…VWQG), 33–53 (GWIW…VATL), 62–82 (ILAA…MVAD), and 88–108 (RWDV…MYAP).

It belongs to the UPF0060 family.

It localises to the cell membrane. The chain is UPF0060 membrane protein RHA1_ro06609 from Rhodococcus jostii (strain RHA1).